Here is a 540-residue protein sequence, read N- to C-terminus: Ipecac alkaloid beta-glucosidase 9 (540 aa).

A beta-D-glucoside is bound by residues Q36, H140, 185-186 (NE), Y350, E421, W470, and F486. Catalysis depends on E186, which acts as the Proton donor. E421 functions as the Nucleophile in the catalytic mechanism.

Belongs to the glycosyl hydrolase 1 family.

It is found in the cytoplasm. The protein resides in the cytosol. The enzyme catalyses deacetylipecoside + H2O = deacetylipecoside aglycone + D-glucose. The catalysed reaction is deacetylisoipecoside + H2O = deacetylisoipecoside aglycone + D-glucose. It participates in alkaloid biosynthesis. Its function is as follows. Beta-glucosidase catalyzing deglucosylation on N-deacetylisoipecoside and N-deacetylipecoside. This chain is Ipecac alkaloid beta-glucosidase 9, found in Carapichea ipecacuanha (Ipecac).